Consider the following 2776-residue polypeptide: A-kinase anchor protein 13 (2776 aa).

Disordered regions lie at residues 371–401, 452–518, 547–584, 618–641, 653–689, 760–871, 910–951, 995–1029, 1431–1508, 1527–1546, and 1565–1603; these read KNKD…SCLQ, EPDA…TETT, PAEA…QSSP, TMPG…PAQS, EAGT…ESTM, VSQT…SPTA, ALGQ…IPGL, GAAK…LPSG, LCDT…MDSI, PFRR…AEMN, and RRSF…FGGE. The span at 389-401 shows a compositional bias: polar residues; sequence DSGSASHQDSCLQ. Residues 493 to 515 are important for interaction with PRKAR2A; it reads QNNKPQVGEGTKERLENSDSSTT. The span at 560-573 shows a compositional bias: basic and acidic residues; sequence PTEKPGMETQERGC. Residues 659–672 are compositionally biased toward polar residues; it reads AEATHQPSTVTSSG. A compositionally biased stretch (low complexity) spans 773 to 788; sequence SPPASSFSLASSPESE. The residue at position 784 (Ser784) is a Phosphoserine. Thr809 is modified (phosphothreonine). Basic and acidic residues-rich tracts occupy residues 820 to 834 and 914 to 940; these read DGPD…DKVG and DGKD…EDQR. Position 941 is a phosphothreonine (Thr941). The span at 1005–1020 shows a compositional bias: polar residues; it reads TSLSADSKQKASSTEQ. The span at 1433–1444 shows a compositional bias: low complexity; that stretch reads DTTGSSSSTDDT. Residues 1454–1476 show a composition bias toward polar residues; it reads GSDVSLPQTSKLNRSRNHQSANG. Residues Ser1455, Ser1473, Ser1507, Ser1532, and Ser1569 each carry the phosphoserine modification. The segment at 1552–1678 is important for interaction with MAP2K3; it reads RALGHVVRRP…SRPFHSTSAN (127 aa). The span at 1583 to 1594 shows a compositional bias: low complexity; that stretch reads SSSLEMSSANSS. A phosphoserine mark is found at Ser1608, Ser1611, and Ser1613. An N6-methyllysine modification is found at Lys1637. Residues 1711–1756 are disordered; the sequence is TFSYIRNKMSSSKKSKEKEKEKDKIKEKEKDSKEKEKDKKTLNGHT. Basic and acidic residues predominate over residues 1724 to 1751; it reads KSKEKEKEKDKIKEKEKDSKEKEKDKKT. Residues 1754–1801 form a Phorbol-ester/DAG-type zinc finger; it reads GHTFSPIPIVGPISCSQCMKPFTNKDAYTCAGCGAFVHKGCRENLASC. Residues Ser1839, Ser1858, and Ser1892 each carry the phosphoserine modification. The tract at residues 1882–2776 is interaction with ESR1; it reads MSNTWKFLSH…VPAEGEEIFC (895 aa). Thr1893 is subject to Phosphothreonine. Phosphoserine occurs at positions 1895 and 1908. The DH domain maps to 1957-2154; it reads KRQEVIYELM…KDVIGAVDSK (198 aa). The PH domain occupies 2194 to 2296; sequence KLVRDGSVFL…WIQIIQDTIN (103 aa). 2 positions are modified to phosphoserine: Ser2308 and Ser2361. Residues 2308–2345 adopt a coiled-coil conformation; the sequence is SENEEEKKLLDTKARELKEQLQQKDQQILLLLEEKEMI. Phosphothreonine is present on Thr2431. The disordered stretch occupies residues 2436–2471; it reads DCHQMNASKGGEKEEGDDGQDLRRTESDSGLKKGGN. Residues 2455 to 2466 show a composition bias toward basic and acidic residues; it reads QDLRRTESDSGL. 2 positions are modified to phosphoserine: Ser2527 and Ser2530. The stretch at 2532–2646 forms a coiled coil; the sequence is LIEQEKQRSL…ERLSQRQMDQ (115 aa). Disordered regions lie at residues 2549-2605 and 2626-2776; these read ANLQ…EELQ and EREQ…EIFC. Basic and acidic residues-rich tracts occupy residues 2558–2605 and 2626–2640; these read HLEE…EELQ and EREQ…ERLS. Composition is skewed to polar residues over residues 2641–2653, 2665–2700, and 2713–2727; these read QRQM…QVSN, LPNS…SISR, and SASQ…SQAP. Phosphoserine is present on residues Ser2673 and Ser2692.

As to quaternary structure, interacts with the cAMP-dependent protein kinase (PKA) holoenzyme and with the regulatory subunit PRKAR2A. Interacts with RHOA. Also interacts with RHOB and RHOC. Identified in a ternary complex with RHOA and PRKAR2A. Identified in a complex with NR3C1 and RHOA. Interacts with BRAF and KSR1. Identified in a complex with BRAF and KSR1. Component of a signaling complex containing at least AKAP13, PKN1, MAPK14, ZAK and MAP2K3. Within this complex, AKAP13 interacts directly with PKN1, which in turn recruits MAPK14, MAP2K3 and ZAK. Interacts (phosphorylated form) with YWHAB and YWHAZ. Interaction with YWHAB inhibits activation of RHOA, interferes with PKN1 binding and activation of MAP kinases. Interacts with GNA12. Interacts with IKBKB. Interacts with ESR1, THRA, PPARA and NME2. Interacts (via the C-terminal domain after the PH domain) with MEF2C and RXRB. Interacts (via the C-terminal domain after the PH domain) with PRKD1. As to expression, detected in embryonic heart, limb bud, first branchial arch and forebrain (at protein level). Detected in heart. Detected in perichondrium, but not in the bone growth plate.

Its subcellular location is the cytoplasm. The protein localises to the cytosol. It is found in the cell cortex. The protein resides in the cytoskeleton. It localises to the nucleus. Its subcellular location is the membrane. Scaffold protein that plays an important role in assembling signaling complexes downstream of several types of G protein-coupled receptors. Activates RHOA in response to signaling via G protein-coupled receptors via its function as Rho guanine nucleotide exchange factor. May also activate other Rho family members. Part of a kinase signaling complex that links ADRA1A and ADRA1B adrenergic receptor signaling to the activation of downstream p38 MAP kinases, such as MAPK11 and MAPK14. Part of a signaling complex that links ADRA1B signaling to the activation of RHOA and IKBKB/IKKB, leading to increased NF-kappa-B transcriptional activity. Part of a RHOA-dependent signaling cascade that mediates responses to lysophosphatidic acid (LPA), a signaling molecule that activates G-protein coupled receptors and potentiates transcriptional activation of the glucocorticoid receptor NR3C1. Part of a signaling cascade that stimulates MEF2C-dependent gene expression in response to lysophosphatidic acid (LPA). Part of a signaling pathway that activates MAPK11 and/or MAPK14 and leads to increased transcription activation of the estrogen receptors ESR1 and ESR2. Part of a signaling cascade that links cAMP and EGFR signaling to BRAF signaling and to PKA-mediated phosphorylation of KSR1, leading to the activation of downstream MAP kinases, such as MAPK1 or MAPK3. Functions as a scaffold protein that anchors cAMP-dependent protein kinase (PKA) and PRKD1. This promotes activation of PRKD1, leading to increased phosphorylation of HDAC5 and ultimately cardiomyocyte hypertrophy. Has no guanine nucleotide exchange activity on CDC42, Ras or Rac. Required for normal embryonic heart development, and in particular for normal sarcomere formation in the developing cardiomyocytes. Plays a role in cardiomyocyte growth and cardiac hypertrophy in response to activation of the beta-adrenergic receptor by phenylephrine or isoproterenol. Required for normal adaptive cardiac hypertrophy in response to pressure overload. Plays a role in osteogenesis. The sequence is that of A-kinase anchor protein 13 from Mus musculus (Mouse).